Here is a 102-residue protein sequence, read N- to C-terminus: uncharacterized protein (102 aa).

Positions 1–41 (MAAPRQIAFYGKGGTGKPKRKPEPVTASKEDRCLGSPSKNK) are disordered.

To the N-terminal of nitrogenase iron protein (NifH). Has lost the ATP-binding site.

Its function is as follows. This protein is either not expressed, expressed at low levels or rapidly degraded. This is an uncharacterized protein from Rhizobium meliloti (Ensifer meliloti).